We begin with the raw amino-acid sequence, 410 residues long: MSKEKIVLAYSGGLDTSVAIAWLKNKGYDVIACCIDVGEGKDLEAIKEKGLQVGAWKSVVIDAKRDFAEQFVLPALQAHAMYEQKYPLVSALSRPLIVQKLVAVANQYGATAIAHGCTGKGNDQVRFEAGIHALAPEMKIEDPIRDWHWSREEEIQYAKDNGIPVPITKASPYSIDENLWGRANECGILEDPWAAAPADAYDRTVSIEEAPDTPTTIEITFNEGVPTAIDGEEMPLDQLIMKLDKLAGSHGIGRIDHVENRLVGIKSREIYECPAATVLLAAHKDLEDLTQEREVAHFKPLIEQKMSGIIYNGLWYSPLMKSLVAFIDESQAVVNGVVRVKLFKGNVICEGRKSPNSLYDKNLATYTSADEFDQEAATGFIKLWELPDKVYAQVQNKNKKKVKENTSDAY.

Residue 9-17 (AYSGGLDTS) participates in ATP binding. Tyr-86 lines the L-citrulline pocket. Residue Gly-116 participates in ATP binding. L-aspartate-binding residues include Thr-118, Asn-122, and Asp-123. Asn-122 serves as a coordination point for L-citrulline. L-citrulline is bound by residues Arg-126, Ser-174, Glu-259, and Tyr-271.

This sequence belongs to the argininosuccinate synthase family. Type 1 subfamily. As to quaternary structure, homotetramer.

It localises to the cytoplasm. It carries out the reaction L-citrulline + L-aspartate + ATP = 2-(N(omega)-L-arginino)succinate + AMP + diphosphate + H(+). Its pathway is amino-acid biosynthesis; L-arginine biosynthesis; L-arginine from L-ornithine and carbamoyl phosphate: step 2/3. The sequence is that of Argininosuccinate synthase from Limosilactobacillus reuteri (strain DSM 20016) (Lactobacillus reuteri).